The chain runs to 313 residues: Ribosomal RNA small subunit methyltransferase H (313 aa).

Residues G35–H37, D55, F79, D101, and Q108 each bind S-adenosyl-L-methionine.

It belongs to the methyltransferase superfamily. RsmH family.

The protein localises to the cytoplasm. It catalyses the reaction cytidine(1402) in 16S rRNA + S-adenosyl-L-methionine = N(4)-methylcytidine(1402) in 16S rRNA + S-adenosyl-L-homocysteine + H(+). In terms of biological role, specifically methylates the N4 position of cytidine in position 1402 (C1402) of 16S rRNA. This chain is Ribosomal RNA small subunit methyltransferase H, found in Escherichia coli O81 (strain ED1a).